The primary structure comprises 374 residues: tRNA-specific 2-thiouridylase MnmA (374 aa).

ATP is bound by residues 12–19 and M38; that span reads GMSGGVDS. The tract at residues 98 to 100 is interaction with target base in tRNA; it reads NPD. The Nucleophile role is filled by C103. An intrachain disulfide couples C103 to C202. G128 is a binding site for ATP. The interval 152 to 154 is interaction with tRNA; it reads KDQ. Catalysis depends on C202, which acts as the Cysteine persulfide intermediate. Residues 316–317 are interaction with tRNA; it reads RY.

Belongs to the MnmA/TRMU family.

It is found in the cytoplasm. The catalysed reaction is S-sulfanyl-L-cysteinyl-[protein] + uridine(34) in tRNA + AH2 + ATP = 2-thiouridine(34) in tRNA + L-cysteinyl-[protein] + A + AMP + diphosphate + H(+). Catalyzes the 2-thiolation of uridine at the wobble position (U34) of tRNA, leading to the formation of s(2)U34. This Vibrio campbellii (strain ATCC BAA-1116) protein is tRNA-specific 2-thiouridylase MnmA.